A 309-amino-acid chain; its full sequence is Oxygen-dependent coproporphyrinogen-III oxidase (309 aa).

Serine 94 contacts substrate. Histidine 98 and histidine 108 together coordinate a divalent metal cation. Histidine 108 acts as the Proton donor in catalysis. 110–112 (NVR) is a substrate binding site. 2 residues coordinate a divalent metal cation: histidine 147 and histidine 177. An important for dimerization region spans residues 242–277 (YVEFNLVWDRGTLFGLQTGGRTESILMSLPPLVRWE). Position 260 to 262 (260 to 262 (GGR)) interacts with substrate.

It belongs to the aerobic coproporphyrinogen-III oxidase family. Homodimer. It depends on a divalent metal cation as a cofactor.

It localises to the cytoplasm. It carries out the reaction coproporphyrinogen III + O2 + 2 H(+) = protoporphyrinogen IX + 2 CO2 + 2 H2O. It participates in porphyrin-containing compound metabolism; protoporphyrin-IX biosynthesis; protoporphyrinogen-IX from coproporphyrinogen-III (O2 route): step 1/1. Involved in the heme biosynthesis. Catalyzes the aerobic oxidative decarboxylation of propionate groups of rings A and B of coproporphyrinogen-III to yield the vinyl groups in protoporphyrinogen-IX. The polypeptide is Oxygen-dependent coproporphyrinogen-III oxidase (Yersinia pestis bv. Antiqua (strain Antiqua)).